The sequence spans 155 residues: Protein FAM162A (155 aa).

Positions 77–103 (RFKKEEEIPETISFEMLDAAKNKLRVK) are required for proapoptotic activity. The chain crosses the membrane as a helical span at residues 104-121 (VSYLMIALTVAGCIYMVI).

The protein belongs to the UPF0389 family. Interacts with HSP90AB1; HSP90AB1 is essential for FAM162A mitochondrial localization and pro-apoptotic activity. Interacts with VDAC2; the interaction is probably involved in inducing mitochondrial permeability transition.

The protein resides in the mitochondrion membrane. Its function is as follows. Proposed to be involved in regulation of apoptosis; the exact mechanism may differ between cell types/tissues. May be involved in hypoxia-induced cell death of transformed cells implicating cytochrome C release and caspase activation (such as CASP9) and inducing mitochondrial permeability transition. May be involved in hypoxia-induced cell death of neuronal cells probably by promoting release of AIFM1 from mitochondria to cytoplasm and its translocation to the nucleus; however, the involvement of caspases has been reported conflictingly. The sequence is that of Protein FAM162A (Fam162a) from Mus musculus (Mouse).